A 223-amino-acid polypeptide reads, in one-letter code: Deoxyribose-phosphate aldolase (223 aa).

D89 (proton donor/acceptor) is an active-site residue. K152 acts as the Schiff-base intermediate with acetaldehyde in catalysis. K181 (proton donor/acceptor) is an active-site residue.

It belongs to the DeoC/FbaB aldolase family. DeoC type 1 subfamily.

Its subcellular location is the cytoplasm. It carries out the reaction 2-deoxy-D-ribose 5-phosphate = D-glyceraldehyde 3-phosphate + acetaldehyde. The protein operates within carbohydrate degradation; 2-deoxy-D-ribose 1-phosphate degradation; D-glyceraldehyde 3-phosphate and acetaldehyde from 2-deoxy-alpha-D-ribose 1-phosphate: step 2/2. Its function is as follows. Catalyzes a reversible aldol reaction between acetaldehyde and D-glyceraldehyde 3-phosphate to generate 2-deoxy-D-ribose 5-phosphate. The polypeptide is Deoxyribose-phosphate aldolase (Listeria innocua serovar 6a (strain ATCC BAA-680 / CLIP 11262)).